A 141-amino-acid chain; its full sequence is Nucleoside diphosphate kinase (141 aa).

Residues K11, F59, R87, T93, R104, and N114 each contribute to the ATP site. H117 (pros-phosphohistidine intermediate) is an active-site residue.

It belongs to the NDK family. Homotetramer. Mg(2+) is required as a cofactor.

The protein resides in the cytoplasm. The enzyme catalyses a 2'-deoxyribonucleoside 5'-diphosphate + ATP = a 2'-deoxyribonucleoside 5'-triphosphate + ADP. The catalysed reaction is a ribonucleoside 5'-diphosphate + ATP = a ribonucleoside 5'-triphosphate + ADP. Functionally, major role in the synthesis of nucleoside triphosphates other than ATP. The ATP gamma phosphate is transferred to the NDP beta phosphate via a ping-pong mechanism, using a phosphorylated active-site intermediate. This chain is Nucleoside diphosphate kinase, found in Hamiltonella defensa subsp. Acyrthosiphon pisum (strain 5AT).